The sequence spans 533 residues: Adenosine deaminase (533 aa).

Residues Met1–Pro19 form the signal peptide.

This sequence belongs to the metallo-dependent hydrolases superfamily. Adenosine and AMP deaminases family. ADGF subfamily. It depends on Zn(2+) as a cofactor. In terms of processing, proteolytically cleaved by human mast cell tryptase and chymase. As to expression, female salivary gland (at protein level).

It is found in the secreted. It catalyses the reaction adenosine + H2O + H(+) = inosine + NH4(+). It carries out the reaction 2'-deoxyadenosine + H2O + H(+) = 2'-deoxyinosine + NH4(+). Its function is as follows. Catalyzes the deamination of adenosine to inosine and deoxyadenosine to deoxyinosine. Induces degranulation of host mast cells, and secretion of tryptase and IL6. Modulates enzymatic activities of human tryptase and chymase. Induces release of cytokines, such as IL1B, IL6, TNF, CCL2, IFN-beta (INFB1) and ISG15, from host monocytes and macrophages. Activates host NF-kappa-B signaling pathway in TAK1/MAP3K7-dependent manner. Functionally, (Microbial infection) Promotes replication of dengue virus type 2 in host cells probably via modulation of cytokine production in host macrophages and monocytes. This chain is Adenosine deaminase, found in Aedes albopictus (Asian tiger mosquito).